The following is a 92-amino-acid chain: RNA-binding protein Hfq (92 aa).

Residues 9–68 (DPFLNALRRERVPVSVYLVNGIKLQGTIESFDQFVVLLRNTVSQMVYKHAISTVVPARNV) enclose the Sm domain. The tract at residues 72–92 (PGGGYVQSNENNQAEDDDVEQ) is disordered.

It belongs to the Hfq family. Homohexamer.

RNA chaperone that binds small regulatory RNA (sRNAs) and mRNAs to facilitate mRNA translational regulation in response to envelope stress, environmental stress and changes in metabolite concentrations. Also binds with high specificity to tRNAs. The polypeptide is RNA-binding protein Hfq (Xanthomonas campestris pv. campestris (strain 8004)).